The primary structure comprises 350 residues: tRNA N6-adenosine threonylcarbamoyltransferase (350 aa).

Fe cation contacts are provided by histidine 115 and histidine 119. Substrate is bound by residues 137-141, aspartate 170, glycine 183, and asparagine 281; that span reads IISGG. Residue aspartate 309 participates in Fe cation binding.

The protein belongs to the KAE1 / TsaD family. The cofactor is Fe(2+).

The protein localises to the cytoplasm. It catalyses the reaction L-threonylcarbamoyladenylate + adenosine(37) in tRNA = N(6)-L-threonylcarbamoyladenosine(37) in tRNA + AMP + H(+). Required for the formation of a threonylcarbamoyl group on adenosine at position 37 (t(6)A37) in tRNAs that read codons beginning with adenine. Is involved in the transfer of the threonylcarbamoyl moiety of threonylcarbamoyl-AMP (TC-AMP) to the N6 group of A37, together with TsaE and TsaB. TsaD likely plays a direct catalytic role in this reaction. The polypeptide is tRNA N6-adenosine threonylcarbamoyltransferase (Ehrlichia canis (strain Jake)).